A 426-amino-acid chain; its full sequence is Histidinol dehydrogenase (426 aa).

NAD(+) contacts are provided by Tyr-123, Gln-185, and Asn-208. Substrate contacts are provided by Ser-231, Gln-253, and His-256. Positions 253 and 256 each coordinate Zn(2+). Active-site proton acceptor residues include Glu-321 and His-322. His-322, Asp-355, Glu-409, and His-414 together coordinate substrate. Asp-355 is a binding site for Zn(2+). His-414 provides a ligand contact to Zn(2+).

This sequence belongs to the histidinol dehydrogenase family. It depends on Zn(2+) as a cofactor.

It carries out the reaction L-histidinol + 2 NAD(+) + H2O = L-histidine + 2 NADH + 3 H(+). It functions in the pathway amino-acid biosynthesis; L-histidine biosynthesis; L-histidine from 5-phospho-alpha-D-ribose 1-diphosphate: step 9/9. In terms of biological role, catalyzes the sequential NAD-dependent oxidations of L-histidinol to L-histidinaldehyde and then to L-histidine. The chain is Histidinol dehydrogenase from Bacillus licheniformis (strain ATCC 14580 / DSM 13 / JCM 2505 / CCUG 7422 / NBRC 12200 / NCIMB 9375 / NCTC 10341 / NRRL NRS-1264 / Gibson 46).